The following is a 58-amino-acid chain: LAMAMGDAVADAQARAMAAAYAIAGKEKEKLKQCFKDMTLAAIDYAKHKVEKHLFKCI.

A propeptide spanning residues 1-24 is cleaved from the precursor; sequence LAMAMGDAVADAQARAMAAAYAIA. Residues C34 and C57 are joined by a disulfide bond.

It belongs to the formicidae venom precursor-01 superfamily. Expressed by the venom gland.

It localises to the secreted. The protein localises to the target cell membrane. In terms of biological role, neurotoxin that causes irreversible rapid flaccid paralysis in blowflies and honeybees upon intrathoracic injection. Causes a quick and irreversible cytolytic effect (at 10 uM) indicating it possibly acts as a pore-forming peptide. Shows only weak effect on aphids (A.pisum) at high doses 24 hours post intrathoracic injection. In vitro, is not cytotoxic on the dipteran S2 Drosophila embryonic cell line. The sequence is that of U11-myrmicitoxin-Tb1a from Tetramorium bicarinatum (Tramp ant).